A 536-amino-acid polypeptide reads, in one-letter code: Methyl-accepting chemotaxis aspartate transducer (536 aa).

The Cytoplasmic portion of the chain corresponds to 1–10 (MFNRIRISTS). A helical membrane pass occupies residues 11–31 (LFLLLISFCIMQLISTGLSYV). Over 32-188 (ALRADNHNLE…ASSQQAYGWS (157 aa)) the chain is Periplasmic. A the 3 Arg may form a positively charged pocket, which binds the alpha-carboxyl group of the attractant AA region spans residues 64–73 (RNTLNRAGTR). Residues 189-209 (IWLVAGAVLMLLVVTLSAMWW) form a helical membrane-spanning segment. Residues 210–536 (LRTMLVQPLN…VKETLDCQTA (327 aa)) are Cytoplasmic-facing. Residues 212-264 (TMLVQPLNIIRGHFERIASGDLSAPIEVYGRNEISQLFASLQRMQQSLIGTVG) enclose the HAMP domain. Residues 269–498 (GAESILIGLQ…ESASAAAALE (230 aa)) enclose the Methyl-accepting transducer domain. Glutamine 293 is subject to Glutamate methyl ester (Gln). Glutamate 300 is modified (glutamate methyl ester (Glu)). Glutamine 307 is subject to Glutamate methyl ester (Gln). Glutamate 489 and glutamate 498 each carry glutamate methyl ester (Glu).

It belongs to the methyl-accepting chemotaxis (MCP) protein family.

It localises to the cell inner membrane. Functionally, this protein responds to changes in Asp concentration in the environment, transduces a signal from the outside to the inside of the cell, and facilitates sensory adaptation through various levels of methylation. Chemotactic-signal transducers respond to changes in the concentration of attractants and repellents in the environment, transduce a signal from the outside to the inside of the cell, and facilitate sensory adaptation through the variation of the level of methylation. Attractants increase the level of methylation while repellents decrease the level of methylation, the methyl groups are added by the methyltransferase CheR and removed by the methylesterase CheB. In Klebsiella aerogenes (strain ATCC 13048 / DSM 30053 / CCUG 1429 / JCM 1235 / KCTC 2190 / NBRC 13534 / NCIMB 10102 / NCTC 10006 / CDC 819-56) (Enterobacter aerogenes), this protein is Methyl-accepting chemotaxis aspartate transducer (tas).